Reading from the N-terminus, the 197-residue chain is MSIIWVCGVDEAGRGPLVGAVVAGAVVLDPNNPIEGLKDSKKLTAARREYLYEQIMEKAKAWGVGEASPTEIDEINILQATMLAMRRAIEDLATRLGAWPDKALIDGNRCPELPIAAEAIIKGDTKEPAISAASIVAKVTRDRQMMSLHERHPEYGFAQHMGYPTEAHFAALKQYGACDQHRRCFSPVRKALESVAS.

The 194-residue stretch at 4–197 (IWVCGVDEAG…VRKALESVAS (194 aa)) folds into the RNase H type-2 domain. A divalent metal cation-binding residues include Asp-10, Glu-11, and Asp-106.

Belongs to the RNase HII family. Requires Mn(2+) as cofactor. Mg(2+) serves as cofactor.

Its subcellular location is the cytoplasm. The catalysed reaction is Endonucleolytic cleavage to 5'-phosphomonoester.. Its function is as follows. Endonuclease that specifically degrades the RNA of RNA-DNA hybrids. In Polynucleobacter necessarius subsp. necessarius (strain STIR1), this protein is Ribonuclease HII.